Consider the following 312-residue polypeptide: Methionyl-tRNA formyltransferase (312 aa).

109–112 (SLLP) serves as a coordination point for (6S)-5,6,7,8-tetrahydrofolate.

The protein belongs to the Fmt family.

The catalysed reaction is L-methionyl-tRNA(fMet) + (6R)-10-formyltetrahydrofolate = N-formyl-L-methionyl-tRNA(fMet) + (6S)-5,6,7,8-tetrahydrofolate + H(+). In terms of biological role, attaches a formyl group to the free amino group of methionyl-tRNA(fMet). The formyl group appears to play a dual role in the initiator identity of N-formylmethionyl-tRNA by promoting its recognition by IF2 and preventing the misappropriation of this tRNA by the elongation apparatus. In Anaeromyxobacter sp. (strain K), this protein is Methionyl-tRNA formyltransferase.